The chain runs to 556 residues: Putative protein SPATA31F2P (556 aa).

Disordered regions lie at residues 133–154 (ALKALSGPHPQSGGQDNDSGSD) and 210–231 (LPKTSPQSAPPSSPLSPNWVSP). A compositionally biased stretch (polar residues) spans 144-154 (SGGQDNDSGSD).

Belongs to the SPATA31 family.

The sequence is that of Putative protein SPATA31F2P from Homo sapiens (Human).